Reading from the N-terminus, the 219-residue chain is Transcriptional activator protein rep2 (219 aa).

Residues 177-197 (CSKCNTTFNHSTALMMHEATC) fold into a zinc finger.

Transcriptional activator which interacts with the mcb binding subunit complex formed by res2 and cdc10. Rep2 is required for the mitotic cell cycle start. The chain is Transcriptional activator protein rep2 (rep2) from Schizosaccharomyces pombe (strain 972 / ATCC 24843) (Fission yeast).